The sequence spans 503 residues: UDP-N-acetylmuramate--L-alanine ligase (503 aa).

Residues 1–22 form a disordered region; it reads MIKQTHVSNSSNNSTNSTAAQV. Residues 8–18 are compositionally biased toward low complexity; that stretch reads SNSSNNSTNST. 135-141 is an ATP binding site; it reads GTHGKTT.

It belongs to the MurCDEF family.

Its subcellular location is the cytoplasm. It catalyses the reaction UDP-N-acetyl-alpha-D-muramate + L-alanine + ATP = UDP-N-acetyl-alpha-D-muramoyl-L-alanine + ADP + phosphate + H(+). It functions in the pathway cell wall biogenesis; peptidoglycan biosynthesis. Functionally, cell wall formation. This is UDP-N-acetylmuramate--L-alanine ligase from Colwellia psychrerythraea (strain 34H / ATCC BAA-681) (Vibrio psychroerythus).